We begin with the raw amino-acid sequence, 364 residues long: Probable dual-specificity RNA methyltransferase RlmN (364 aa).

The active-site Proton acceptor is glutamate 107. One can recognise a Radical SAM core domain in the interval histidine 113–aspartate 346. Cysteine 120 and cysteine 351 are oxidised to a cystine. [4Fe-4S] cluster is bound by residues cysteine 127, cysteine 131, and cysteine 134. S-adenosyl-L-methionine-binding positions include glycine 177 to glutamate 178, serine 209, serine 232 to histidine 234, and asparagine 308. Cysteine 351 acts as the S-methylcysteine intermediate in catalysis.

The protein belongs to the radical SAM superfamily. RlmN family. The cofactor is [4Fe-4S] cluster.

The protein localises to the cytoplasm. The enzyme catalyses adenosine(2503) in 23S rRNA + 2 reduced [2Fe-2S]-[ferredoxin] + 2 S-adenosyl-L-methionine = 2-methyladenosine(2503) in 23S rRNA + 5'-deoxyadenosine + L-methionine + 2 oxidized [2Fe-2S]-[ferredoxin] + S-adenosyl-L-homocysteine. It catalyses the reaction adenosine(37) in tRNA + 2 reduced [2Fe-2S]-[ferredoxin] + 2 S-adenosyl-L-methionine = 2-methyladenosine(37) in tRNA + 5'-deoxyadenosine + L-methionine + 2 oxidized [2Fe-2S]-[ferredoxin] + S-adenosyl-L-homocysteine. Functionally, specifically methylates position 2 of adenine 2503 in 23S rRNA and position 2 of adenine 37 in tRNAs. Confers resistance to some classes of antibiotics. The chain is Probable dual-specificity RNA methyltransferase RlmN from Staphylococcus haemolyticus (strain JCSC1435).